Reading from the N-terminus, the 497-residue chain is Delayed-rectifier potassium channel regulatory subunit KCNS1 (497 aa).

Over 1–186 (MVSEFPGPGS…LTMENPGYSL (186 aa)) the chain is Cytoplasmic. The chain crosses the membrane as a helical span at residues 187 to 208 (PSKLFSCVSIGVVLASIAAMCI). Over 209–239 (HSLPEYQAREAAAAVAAVAAGRSAEEVRDDP) the chain is Extracellular. The chain crosses the membrane as a helical span at residues 240–262 (VLRRLEYFCIAWFSFEVSSRLLL). At 263–273 (APSTRNFFCHP) the chain is on the cytoplasmic side. The helical transmembrane segment at 274-291 (LNLIDIVSVLPFYLTLLA) threads the bilayer. At 292–309 (GAALGDQRGASGEELGDL) the chain is on the extracellular side. Residues 310-330 (GKVVQVFRLMRIFRVLKLARH) traverse the membrane as a helical; Voltage-sensor segment. The Cytoplasmic portion of the chain corresponds to 331–345 (STGLRSLGATLKHSY). A helical membrane pass occupies residues 346 to 367 (REVGILLLYLAVGVSVFSGVAY). Over 368 to 379 (TAEEENEGFHTI) the chain is Extracellular. The helical intramembrane region spans 380–391 (PACWWWGTVSMT). The Selectivity filter motif lies at 392 to 397 (TVGYGD). The stretch at 392 to 399 (TVGYGDVV) is an intramembrane region. Residues 400 to 406 (PETVGGK) lie on the Extracellular side of the membrane. A helical transmembrane segment spans residues 407 to 435 (LAASGCILGGILVVALPITIIFNKFSHFY). The Cytoplasmic portion of the chain corresponds to 436-497 (RRQKALEAAV…PREPAKSHSY (62 aa)). Residues 464–497 (SDVSLETSRDTSQEGRSTDLETQAPREPAKSHSY) form a disordered region. Positions 470 to 482 (TSRDTSQEGRSTD) are enriched in basic and acidic residues.

This sequence belongs to the potassium channel family. S (TC 1.A.1.2) subfamily. Kv9.1/KCNS1 sub-subfamily. In terms of assembly, heterotetramer with KCNB1 and KCNB2. Does not form homomultimers. As to expression, detected in brain, but not in the other tissues tested. The highest levels of expression are in olfactory bulb, cerebral cortex, hippocampus, habenula, basolateral amygdaloid nuclei and cerebellum.

The protein localises to the cell membrane. Potassium channel regulatory subunit that modulate the delayed rectifier voltage-gated potassium channel activity of KCNB1 and KCNB2 by altering their kinetics, expression levels, and shifting the half-inactivation potential to more polarized values. While it does not form functional channels on its own, it can form functional heterotetrameric channels with KCNB1 and KCNB2. Each regulatory subunit has unique regulatory properties that can lead to extensive inhibition, significant changes in kinetics, and/or substantial shifts in the voltage dependencies of the inactivation process. The polypeptide is Delayed-rectifier potassium channel regulatory subunit KCNS1 (Mus musculus (Mouse)).